The primary structure comprises 100 residues: Noncompact myelin-associated protein (100 aa).

The Extracellular portion of the chain corresponds to 1 to 28 (MTTATTLGDAVFSLNMTRGEDALYKSSG). A helical membrane pass occupies residues 29-49 (AIVAAIVVVVIIIVTLVLILL). The Cytoplasmic segment spans residues 50-100 (KMYNRRMRTRRELEPKSPKPPVPPALDPSSNGSQQPATVTFDPANVHVETR). Residues 58–100 (TRRELEPKSPKPPVPPALDPSSNGSQQPATVTFDPANVHVETR) are disordered.

Post-translationally, glycosylated. Found in the peripheral nervous system (PNS) Schwann cells (at protein level). Expressed in the PNS, primarily limited to Schwann cells.

The protein localises to the cell membrane. Plays a role in myelin formation. The chain is Noncompact myelin-associated protein (Ncmap) from Mus musculus (Mouse).